A 432-amino-acid chain; its full sequence is MSSSCSGLTRVLVAVATALVSSSSPCPQAWGPPGVQYGQPGRPVMLCCPGVSAGTPVSWFRDGDSRLLQGPDSGLGHRLVLAQVDSPDEGTYVCQTLDGVSGGMVTLKLGFPPARPEVSCQAVDYENFSCTWSPGQVSGLPTRYLTSYRKKTLPGAESQRESPSTGPWPCPQDPLEASRCVVHGAEFWSEYRINVTEVNPLGASTCLLDVRLQSILRPDPPQGLRVESVPGYPRRLHASWTYPASWRRQPHFLLKFRLQYRPAQHPAWSTVEPIGLEEVITDTVAGLPHAVRVSARDFLDAGTWSAWSPEAWGTPSTGLLQDEIPDWSQGHGQQLEAVVAQEDSLAPARPSLQPDPRPLDHRDPLEQVAVLASLGIFSCLGLAVGALALGLWLRLRRSGKEGPQKPGLLAPMIPVEKLPGIPNLQRTPENFS.

The signal sequence occupies residues 1–23 (MSSSCSGLTRVLVAVATALVSSS). Over 24-372 (SPCPQAWGPP…DPLEQVAVLA (349 aa)) the chain is Extracellular. The region spanning 27–110 (PQAWGPPGVQ…SGGMVTLKLG (84 aa)) is the Ig-like C2-type domain. Intrachain disulfides connect Cys48-Cys94, Cys120-Cys130, and Cys170-Cys180. 2 consecutive Fibronectin type-III domains span residues 112–219 (PPAR…LRPD) and 220–317 (PPQG…TPST). An N-linked (GlcNAc...) asparagine glycan is attached at Asn127. The segment at 151–170 (KTLPGAESQRESPSTGPWPC) is disordered. N-linked (GlcNAc...) asparagine glycosylation is present at Asn194. Residues 304–308 (WSAWS) carry the WSXWS motif motif. A helical transmembrane segment spans residues 373–393 (SLGIFSCLGLAVGALALGLWL). Over 394 to 432 (RLRRSGKEGPQKPGLLAPMIPVEKLPGIPNLQRTPENFS) the chain is Cytoplasmic.

The protein belongs to the type I cytokine receptor family. Type 3 subfamily. In terms of assembly, on ligand binding, forms a multimer complex with IL6ST/gp130. In terms of tissue distribution, expression restricted to testis, lymph node and thymus. Highest level in testis.

It localises to the membrane. Its function is as follows. Receptor for interleukin-11. The receptor systems for IL6, LIF, OSM, CNTF, IL11 and CT1 can utilize IL6ST for initiating signal transmission. The IL11/IL11RA/IL6ST complex may be involved in the control of proliferation and/or differentiation of skeletogenic progenitor or other mesenchymal cells. The protein is Interleukin-11 receptor subunit alpha-2 (Il11ra2) of Mus musculus (Mouse).